Reading from the N-terminus, the 287-residue chain is Ribosomal RNA small subunit methyltransferase A (287 aa).

Residues Asn35, Val37, Gly62, Glu83, Asp113, and Asn131 each contribute to the S-adenosyl-L-methionine site.

This sequence belongs to the class I-like SAM-binding methyltransferase superfamily. rRNA adenine N(6)-methyltransferase family. RsmA subfamily.

The protein localises to the cytoplasm. The enzyme catalyses adenosine(1518)/adenosine(1519) in 16S rRNA + 4 S-adenosyl-L-methionine = N(6)-dimethyladenosine(1518)/N(6)-dimethyladenosine(1519) in 16S rRNA + 4 S-adenosyl-L-homocysteine + 4 H(+). Its function is as follows. Specifically dimethylates two adjacent adenosines (A1518 and A1519) in the loop of a conserved hairpin near the 3'-end of 16S rRNA in the 30S particle. May play a critical role in biogenesis of 30S subunits. In Thermobifida fusca (strain YX), this protein is Ribosomal RNA small subunit methyltransferase A.